The primary structure comprises 306 residues: Pantothenate kinase (306 aa).

90-97 (GSVAVGKS) is an ATP binding site.

It belongs to the prokaryotic pantothenate kinase family.

It localises to the cytoplasm. The enzyme catalyses (R)-pantothenate + ATP = (R)-4'-phosphopantothenate + ADP + H(+). The protein operates within cofactor biosynthesis; coenzyme A biosynthesis; CoA from (R)-pantothenate: step 1/5. This chain is Pantothenate kinase, found in Listeria monocytogenes serotype 4a (strain HCC23).